The sequence spans 301 residues: Aspartate carbamoyltransferase catalytic subunit (301 aa).

Residues arginine 54 and threonine 55 each contribute to the carbamoyl phosphate site. Residue lysine 82 participates in L-aspartate binding. The carbamoyl phosphate site is built by arginine 104, histidine 132, and glutamine 135. The L-aspartate site is built by arginine 165 and arginine 217. Carbamoyl phosphate-binding residues include glycine 257 and proline 258.

Belongs to the aspartate/ornithine carbamoyltransferase superfamily. ATCase family. Heterododecamer (2C3:3R2) of six catalytic PyrB chains organized as two trimers (C3), and six regulatory PyrI chains organized as three dimers (R2).

The enzyme catalyses carbamoyl phosphate + L-aspartate = N-carbamoyl-L-aspartate + phosphate + H(+). It participates in pyrimidine metabolism; UMP biosynthesis via de novo pathway; (S)-dihydroorotate from bicarbonate: step 2/3. Catalyzes the condensation of carbamoyl phosphate and aspartate to form carbamoyl aspartate and inorganic phosphate, the committed step in the de novo pyrimidine nucleotide biosynthesis pathway. The polypeptide is Aspartate carbamoyltransferase catalytic subunit (Thermus aquaticus).